Consider the following 282-residue polypeptide: Small-conductance mechanosensitive channel (282 aa).

Residues 1–23 lie on the Periplasmic side of the membrane; that stretch reads MWADIYHKLVEIYDIKAVKFLLD. Residues 24-46 traverse the membrane as a helical segment; it reads VLKILIIAFIGIKFADFLIYRFY. Residues 47-66 are Cytoplasmic-facing; sequence KLYSKSKIQLPQRKIDTLTS. Residues 67 to 87 traverse the membrane as a helical segment; sequence LTKNAVRYIIYFLAGASILKL. The Periplasmic segment spans residues 88-89; sequence FN. A helical membrane pass occupies residues 90 to 110; the sequence is IDMTSLLAVAGIGSLAIGFGA. Residues 111–282 are Cytoplasmic-facing; the sequence is QNLVKDMISG…TVILSEKKTN (172 aa).

The protein belongs to the MscS (TC 1.A.23) family. As to quaternary structure, homoheptamer.

It localises to the cell inner membrane. Functionally, mechanosensitive ion channel that participates in the regulation of osmotic pressure changes within the cell, opening in response to stretch forces in the membrane lipid bilayer, without the need for other proteins. Has high selectivity for anions, and may contribute to resistance to hypoosmotic shock. The polypeptide is Small-conductance mechanosensitive channel (Caldanaerobacter subterraneus subsp. tengcongensis (strain DSM 15242 / JCM 11007 / NBRC 100824 / MB4) (Thermoanaerobacter tengcongensis)).